Reading from the N-terminus, the 474-residue chain is Dihydrolipoyl dehydrogenase (474 aa).

Residues 39–47 (EKDAYGGTC), Lys-56, and Ala-118 each bind FAD. A disulfide bond links Cys-47 and Cys-52. NAD(+)-binding positions include 186-190 (GGGYI), Glu-209, and 275-278 (AVGR). The FAD site is built by Asp-318 and Ala-326. His-450 acts as the Proton acceptor in catalysis.

This sequence belongs to the class-I pyridine nucleotide-disulfide oxidoreductase family. Homodimer. It depends on FAD as a cofactor.

It is found in the cytoplasm. It carries out the reaction N(6)-[(R)-dihydrolipoyl]-L-lysyl-[protein] + NAD(+) = N(6)-[(R)-lipoyl]-L-lysyl-[protein] + NADH + H(+). In Halobacterium salinarum (strain ATCC 700922 / JCM 11081 / NRC-1) (Halobacterium halobium), this protein is Dihydrolipoyl dehydrogenase (lpdA).